The primary structure comprises 170 residues: Dual-action ribosomal maturation protein DarP (170 aa).

The protein belongs to the DarP family.

Its subcellular location is the cytoplasm. Its function is as follows. Member of a network of 50S ribosomal subunit biogenesis factors which assembles along the 30S-50S interface, preventing incorrect 23S rRNA structures from forming. Promotes peptidyl transferase center (PTC) maturation. This is Dual-action ribosomal maturation protein DarP from Neisseria meningitidis serogroup A / serotype 4A (strain DSM 15465 / Z2491).